Consider the following 241-residue polypeptide: Xyloglucan-specific endo-beta-1,4-glucanase 1 (241 aa).

Residues 1–19 (MKGFFAGVVAAATLAVASA) form the signal peptide. Residue Glu-136 is part of the active site. N-linked (GlcNAc...) asparagine glycosylation is found at Asn-174 and Asn-190. Residue Glu-222 is part of the active site.

The protein belongs to the glycosyl hydrolase 12 (cellulase H) family. Interacts with host apoplastic glucanase inhibitor GIP1.

It is found in the secreted. It localises to the host. The enzyme catalyses xyloglucan + H2O = xyloglucan oligosaccharides.. Its activity is regulated as follows. The xyloglucanase activity is inhibited by the binding of the host apoplastic glucanase inhibitor GIP1. Functionally, glycoside hydrolase that exhibits xyloglucanase activity. Acts as an important virulence factor during P.sojae infection but also acts as a pathogen-associated molecular pattern (PAMP) in soybean and solanaceous species, where it can trigger defense responses including cell death. XEG1-induced cell death can be suppressed by P.sojae RxLR effectors. The PAMP activity is independent of its xyloglucanase activity. XEG1 induces plant defense responses in a RLP kinase Serk3/Bak1-dependent manner in Nicotiana benthamiana. Moreover, the perception of XEG1 occurs independently of the perception of ethylene-inducing xylanase Eix2 in Tomato. With truncated paralog XLP1, is required to elevate apoplastic sugar during P.sojae infection. The polypeptide is Xyloglucan-specific endo-beta-1,4-glucanase 1 (Phytophthora sojae (strain P6497) (Soybean stem and root rot agent)).